A 543-amino-acid polypeptide reads, in one-letter code: Bifunctional riboflavin biosynthesis protein RIBA 1, chloroplastic (543 aa).

The N-terminal 56 residues, 1–56 (MSSINLSSSSPSTISLSRSRLSQSSTTLLHGLHRVTLPSNHPLSTFSIKTNTGKVK), are a transit peptide targeting the chloroplast. The tract at residues 57–328 (AAVISREDDL…IADLIRYRRK (272 aa)) is DHBP synthase. D-ribulose 5-phosphate-binding positions include 152-153 (RE), Asp157, 267-271 (RAGHT), and Glu291. Residue Glu153 coordinates Mg(2+). His270 contributes to the Mg(2+) binding site. The segment at 329–543 (RDKLVERASA…VEKIESESES (215 aa)) is GTP cyclohydrolase II. 379–383 (RVHSE) provides a ligand contact to GTP. The Zn(2+) site is built by Cys384, Cys395, and Cys397. Residues Gln400, 423–425 (EGR), and Thr445 contribute to the GTP site. The active-site Proton acceptor; for GTP cyclohydrolase activity is the Asp457. Arg459 (nucleophile; for GTP cyclohydrolase activity) is an active-site residue. Residues Thr480 and Lys485 each coordinate GTP.

The protein in the N-terminal section; belongs to the DHBP synthase family. It in the C-terminal section; belongs to the GTP cyclohydrolase II family. It depends on Mg(2+) as a cofactor. Mn(2+) is required as a cofactor. Requires Zn(2+) as cofactor. In terms of tissue distribution, expressed in leaves, shoots, roots, flowers and siliques.

The protein localises to the plastid. The protein resides in the chloroplast. The enzyme catalyses D-ribulose 5-phosphate = (2S)-2-hydroxy-3-oxobutyl phosphate + formate + H(+). It carries out the reaction GTP + 4 H2O = 2,5-diamino-6-hydroxy-4-(5-phosphoribosylamino)-pyrimidine + formate + 2 phosphate + 3 H(+). The protein operates within cofactor biosynthesis; riboflavin biosynthesis; 2-hydroxy-3-oxobutyl phosphate from D-ribulose 5-phosphate: step 1/1. It participates in cofactor biosynthesis; riboflavin biosynthesis; 5-amino-6-(D-ribitylamino)uracil from GTP: step 1/4. In terms of biological role, involved in riboflavin biosynthesis. Catalyzes both the conversion of D-ribulose 5-phosphate to formate and 3,4-dihydroxy-2-butanone 4-phosphate and the conversion of GTP to 2,5-diamino-6-ribosylamino-4(3H)-pyrimidinone 5'-phosphate (DARP), formate and pyrophosphate. RIBA2 and RIBA3 together are not able to complement the loss of function of RIBA1. The chain is Bifunctional riboflavin biosynthesis protein RIBA 1, chloroplastic (RIBA1) from Arabidopsis thaliana (Mouse-ear cress).